Here is a 449-residue protein sequence, read N- to C-terminus: Bifunctional protein GlmU (449 aa).

Residues 1-229 (MKLSAVILAA…EEDIYGINDR (229 aa)) are pyrophosphorylase. Residues 8-11 (LAAG), K22, Q73, and 78-79 (GT) each bind UDP-N-acetyl-alpha-D-glucosamine. D102 contributes to the Mg(2+) binding site. 4 residues coordinate UDP-N-acetyl-alpha-D-glucosamine: G139, E154, N169, and N227. N227 is a Mg(2+) binding site. The segment at 230–250 (VQLAQAENILRQRKNRELMLS) is linker. An N-acetyltransferase region spans residues 251–449 (GVSLMDPAST…AGQKHLPRKG (199 aa)). 2 residues coordinate UDP-N-acetyl-alpha-D-glucosamine: R332 and K350. H362 acts as the Proton acceptor in catalysis. The UDP-N-acetyl-alpha-D-glucosamine site is built by Y365 and N376. Acetyl-CoA contacts are provided by residues A379, 385 to 386 (NY), S404, A422, and R439.

In the N-terminal section; belongs to the N-acetylglucosamine-1-phosphate uridyltransferase family. It in the C-terminal section; belongs to the transferase hexapeptide repeat family. Homotrimer. Mg(2+) serves as cofactor.

The protein resides in the cytoplasm. It carries out the reaction alpha-D-glucosamine 1-phosphate + acetyl-CoA = N-acetyl-alpha-D-glucosamine 1-phosphate + CoA + H(+). It catalyses the reaction N-acetyl-alpha-D-glucosamine 1-phosphate + UTP + H(+) = UDP-N-acetyl-alpha-D-glucosamine + diphosphate. It functions in the pathway nucleotide-sugar biosynthesis; UDP-N-acetyl-alpha-D-glucosamine biosynthesis; N-acetyl-alpha-D-glucosamine 1-phosphate from alpha-D-glucosamine 6-phosphate (route II): step 2/2. Its pathway is nucleotide-sugar biosynthesis; UDP-N-acetyl-alpha-D-glucosamine biosynthesis; UDP-N-acetyl-alpha-D-glucosamine from N-acetyl-alpha-D-glucosamine 1-phosphate: step 1/1. It participates in bacterial outer membrane biogenesis; LPS lipid A biosynthesis. Its function is as follows. Catalyzes the last two sequential reactions in the de novo biosynthetic pathway for UDP-N-acetylglucosamine (UDP-GlcNAc). The C-terminal domain catalyzes the transfer of acetyl group from acetyl coenzyme A to glucosamine-1-phosphate (GlcN-1-P) to produce N-acetylglucosamine-1-phosphate (GlcNAc-1-P), which is converted into UDP-GlcNAc by the transfer of uridine 5-monophosphate (from uridine 5-triphosphate), a reaction catalyzed by the N-terminal domain. In Syntrophomonas wolfei subsp. wolfei (strain DSM 2245B / Goettingen), this protein is Bifunctional protein GlmU.